A 292-amino-acid chain; its full sequence is Zinc finger protein OZF (292 aa).

C2H2-type zinc fingers lie at residues 16 to 38, 44 to 66, 72 to 94, 100 to 122, 128 to 150, 156 to 178, 184 to 206, 212 to 234, 240 to 262, and 268 to 290; these read FACK…EHFH, FECN…QNTH, FECN…QKIH, FECK…QRTH, FVCK…EKIH, FKCS…QNIH, YECN…VRIH, YECN…VRSH, YGCN…LRIH, and YQCS…QKIH. Glycyl lysine isopeptide (Lys-Gly) (interchain with G-Cter in SUMO2) cross-links involve residues lysine 28, lysine 51, and lysine 56. Residues lysine 157 and lysine 169 each participate in a glycyl lysine isopeptide (Lys-Gly) (interchain with G-Cter in SUMO) cross-link. A Glycyl lysine isopeptide (Lys-Gly) (interchain with G-Cter in SUMO2) cross-link involves residue lysine 173. An interaction with TERF2IP region spans residues 212-292; it reads YECNVCGKAF…HIRHQKIHTH (81 aa).

Belongs to the krueppel C2H2-type zinc-finger protein family. As to quaternary structure, binds DNA. Interacts with SUMO conjugating enzyme UBC9/UBE2I. Interacts with the telomeric protein TERF2IP. Sumoylated. As to expression, liver, skeletal and heart muscle, mammary cells. Very low levels in brain, lung, placenta and kidney. Strongly overexpressed in many pancreas and colorectal cancers. Increased gene copy numbers are detected in 3 of 12 tumor cell lines and 2 of 12 primary pancreatic carcinomas. Overexpressed in 80% of colorectal cancers.

It localises to the nucleus. The sequence is that of Zinc finger protein OZF (ZNF146) from Homo sapiens (Human).